Here is a 150-residue protein sequence, read N- to C-terminus: Holo-[acyl-carrier-protein] synthase (150 aa).

Mg(2+)-binding residues include Asp8 and Glu57.

This sequence belongs to the P-Pant transferase superfamily. AcpS family. Mg(2+) is required as a cofactor.

It localises to the cytoplasm. It carries out the reaction apo-[ACP] + CoA = holo-[ACP] + adenosine 3',5'-bisphosphate + H(+). Its function is as follows. Transfers the 4'-phosphopantetheine moiety from coenzyme A to a Ser of acyl-carrier-protein. The protein is Holo-[acyl-carrier-protein] synthase of Jannaschia sp. (strain CCS1).